The sequence spans 145 residues: Large-conductance mechanosensitive channel (145 aa).

The next 2 helical transmembrane spans lie at Val16–Phe36 and Gly83–Ile103.

It belongs to the MscL family. As to quaternary structure, homopentamer.

The protein resides in the cell inner membrane. Channel that opens in response to stretch forces in the membrane lipid bilayer. May participate in the regulation of osmotic pressure changes within the cell. The polypeptide is Large-conductance mechanosensitive channel (Geobacter metallireducens (strain ATCC 53774 / DSM 7210 / GS-15)).